Consider the following 432-residue polypeptide: MDNTTPQQIFSLRSHENSISNIEEVFLWNKHCLISSDTKGWIIIWNINAKRPIRKWQAHDETILTLTLISTNTLLTHGRDASLKIWDISVEHAESSPPELFFLPINTLNFCNVQYFNDFLITPASVDSNNFDIYKITNPEYEFKRVLANFSPFDLYSKNKTEINSPNEQGRNDFGIIMKLVYVEHSNQLFLGFESGQIIGLNINLNPDATLVDKTTEAYSKKTPSKYGGLSSLIDKTSSRTLINKEPRVNLIYSDSSHIPNPITSLVHLKDNILISGSTNKQVIVHHYQMHSIDSSDAHLDVKKVAHSGIQSIVADEKTDTIFIGHWNGVIEGVDYKSNKKKLDSQFELKRDLPHLITTSTNSSGGDTNTIAKEAVKLTSLALSIERENTQVTTTKKKSYKDLVKARSAYIGNDNRLLFAGYEDGAVVAYRL.

WD repeat units follow at residues Ser14 to Lys55, Ala58 to Ser96, Leu100 to Lys144, His258 to Ser296, and Thr395 to Leu432.

This sequence belongs to the WD repeat ASA1 family. As to quaternary structure, component of the ASTRA chromatin remodeling machinery complex.

Its subcellular location is the nucleus. In terms of biological role, component of the ASTRA complex involved in chromatin remodeling. In Scheffersomyces stipitis (strain ATCC 58785 / CBS 6054 / NBRC 10063 / NRRL Y-11545) (Yeast), this protein is ASTRA-associated protein 1 (ASA1).